Here is an 876-residue protein sequence, read N- to C-terminus: Phosphoenolpyruvate carboxylase (876 aa).

Catalysis depends on residues histidine 138 and lysine 543.

Belongs to the PEPCase type 1 family. It depends on Mg(2+) as a cofactor.

The catalysed reaction is oxaloacetate + phosphate = phosphoenolpyruvate + hydrogencarbonate. Forms oxaloacetate, a four-carbon dicarboxylic acid source for the tricarboxylic acid cycle. This is Phosphoenolpyruvate carboxylase from Pseudomonas fluorescens (strain ATCC BAA-477 / NRRL B-23932 / Pf-5).